A 331-amino-acid polypeptide reads, in one-letter code: Tetraacyldisaccharide 4'-kinase (331 aa).

60–67 (TIGGTGKT) is an ATP binding site.

This sequence belongs to the LpxK family.

The enzyme catalyses a lipid A disaccharide + ATP = a lipid IVA + ADP + H(+). The protein operates within glycolipid biosynthesis; lipid IV(A) biosynthesis; lipid IV(A) from (3R)-3-hydroxytetradecanoyl-[acyl-carrier-protein] and UDP-N-acetyl-alpha-D-glucosamine: step 6/6. Functionally, transfers the gamma-phosphate of ATP to the 4'-position of a tetraacyldisaccharide 1-phosphate intermediate (termed DS-1-P) to form tetraacyldisaccharide 1,4'-bis-phosphate (lipid IVA). The protein is Tetraacyldisaccharide 4'-kinase of Pseudomonas syringae pv. tomato (strain ATCC BAA-871 / DC3000).